We begin with the raw amino-acid sequence, 272 residues long: Alkaline ceramidase (272 aa).

2 helical membrane passes run 34–54 and 61–81; these read FANTCTNLPIIVLPLVNIMLL and VNGGLIFPQLLLTFNGLASTY. His-83 contacts Zn(2+). The next 4 membrane-spanning stretches (helical) occupy residues 96 to 116, 124 to 144, 148 to 168, and 183 to 203; these read LSLVWIITVFLVVYIPVMKWF, LTLVRWVVLIVTALVSGLCFL, LNAIALMLFSIPAAVVINYEG, and ILALWGVAFSFWFADRLLCDF. Residues His-213 and His-217 each contribute to the Zn(2+) site. Residues 214 to 234 form a helical membrane-spanning segment; sequence ALFHLLAGLAGYTIFIMFSMI. The N-linked (GlcNAc...) asparagine glycan is linked to Asn-256.

The protein belongs to the alkaline ceramidase family. Zn(2+) is required as a cofactor.

It is found in the membrane. The catalysed reaction is an N-acyl-sphingoid base + H2O = a sphingoid base + a fatty acid. The enzyme catalyses an N-acylsphing-4-enine + H2O = sphing-4-enine + a fatty acid. It catalyses the reaction an N-acyl-15-methylhexadecasphing-4-enine + H2O = 15-methylhexadecasphing-4-enine + a fatty acid. The protein operates within lipid metabolism; sphingolipid metabolism. Functionally, hydrolyzes the sphingolipid ceramide into sphingoid base and free fatty acid. C.elegans contain specific sphingoid bases, which are unique or different in structure compared to the sphingoid bases found in other animals. Two examples of these distinctive compounds are: 15-methylhexadecasphinganine and 15-methylhexadecasphing-4-enine. The sequence is that of Alkaline ceramidase from Caenorhabditis elegans.